Here is a 379-residue protein sequence, read N- to C-terminus: Alcohol dehydrogenase class-2 isozyme 2 (379 aa).

Residues Cys-47, His-69, Cys-99, Cys-102, Cys-105, Cys-113, and Cys-176 each coordinate Zn(2+). Residues 205-210, Asp-229, Lys-234, 298-300, and Arg-374 each bind NAD(+); these read GLGGVG and VGV.

It belongs to the zinc-containing alcohol dehydrogenase family. Class-II subfamily. In terms of assembly, homodimer. Requires Zn(2+) as cofactor.

The protein localises to the cytoplasm. It catalyses the reaction a primary alcohol + NAD(+) = an aldehyde + NADH + H(+). The catalysed reaction is a secondary alcohol + NAD(+) = a ketone + NADH + H(+). This is Alcohol dehydrogenase class-2 isozyme 2 (ADH2-2) from Oryctolagus cuniculus (Rabbit).